Reading from the N-terminus, the 370-residue chain is Probable neutral protease 2 homolog TRV_02539 (370 aa).

The signal sequence occupies residues 1–19; sequence MQLVAALAALGALVAPAVA. A propeptide spanning residues 20–188 is cleaved from the precursor; it reads YPHAPMNETL…SIHSRALQKR (169 aa). Cystine bridges form between Cys-196/Cys-267 and Cys-274/Cys-292. His-316 serves as a coordination point for Zn(2+). Glu-317 is an active-site residue. Zn(2+)-binding residues include His-320 and Asp-331.

It belongs to the peptidase M35 family. It depends on Zn(2+) as a cofactor.

It localises to the secreted. It catalyses the reaction Preferential cleavage of bonds with hydrophobic residues in P1'. Also 3-Asn-|-Gln-4 and 8-Gly-|-Ser-9 bonds in insulin B chain.. In terms of biological role, probable secreted metalloprotease that shows high activities on basic nuclear substrates such as histone and protamine. May be involved in virulence. The sequence is that of Probable neutral protease 2 homolog TRV_02539 from Trichophyton verrucosum (strain HKI 0517).